The sequence spans 1327 residues: MPRQLLSGTVLLGAAFLLAGSTSGSKLKVPVLSVNGRQHVVQAGQTLNLTCRGEMLHSWSLPEALSKDSKRLNVTKYACGRNGTQFCSTLTLSRTQANDTGRYSCRYPTSPVKKKRESIVYVFINDTSNPFVEMHSDIPKIIHMTVGKEMIIPCRVTAPNIAVTLKKIPRETLIPDGKTIIWDNMRGFRIPEATYRFIGLLSCETTIGGHKYSTKYLTHRETNTIFDIKLSTPRLVKLLKGDSLAINCTVKAAWNTRVQMTWTYPGEAMKRGSVTQRIDQKNREANVFYSILVIDKVRDIDKGQYACHVKSGPSNKLVNTTVIVYDKRFINLKRRRKTMLEAVAGRKSYRLPMKVKAFPSPEVTWLKDGLPAAEKCARYMVKNYSLIIKDVAEEDAGNYTIILSLRQWNLSKNLTVTLKVNVKPQIYENAVSSFPDPNLYLLSSKQVLTCTVYGIPPPKITWMWYPCRQNHSKTRRGFCSRTDGSFNLKTGSNIGNRIQSIIERTAIIEGKNKTASTLVVAEAKSSGIYSCVASNKVGKAERNVSFLVTDVPSGFHISLEKVPIEGENLVLSCSANKFMYKDISWILPRTVTNQTKARKALNKEYSITLTLTIRNVSLAHSGTYTCRARNIFTGKEVLQKKDVSIRAQEAPALLRQLMDQTVNTSNSAMLECQVHGIPEPQITWFKNHEEIQQESGIILGPGSRMLFIERVKEEDEGLYQCIATNLKGSVESTAYVTVQGTVERSNLELITLTCTCVAATLFWLLLTLFIRKLKRPYFSETKTNHYLSIIMDPDEVPLDEQCECLPYDASKWEIARERLKLGKSLGHGAFGKVVQASAFGIKKSPTCRIVAVKMLKEGATASEYKALMTELKILIHIGHHLNIVNLLGACTKNGGPLMVIVEYCKYGNLSNYLKSKRNFFSPTKDPSLQGELMKDKKGIEPVEGKKQRLASVTSSESFASSGFQEDKSLSDAEEDEEDAAELYKLPLTMEDLISYSFQVARGMEFLSSRKCIHRDLAARNILLSENNVVKICDFGLARDIYKNPDYVRKGDARLPLKWMAPESIFDKIYNTKSDVWSYGVLLWEIFSLGASPYPGVQIDEDFCSKLKEGTRMRAPEQATEEIYQIMLDCWRSNPNERPWFSELVKRLGDLLQASVQQEGKDYIPLDTIFTAESGFPPASDPLCNEKFPVPSPNCRSTERARYINTFKIKPPQRIKTFEELPIKEKLVFNDYQADSGMVLASEELKRFTWTGSKQKWTLFGMKGVSRSKESGLSGITKPRSFCSFSCDQLSESKRRYTYGNTVLEKMKACHSPPPDYSSVVHYSQPSI.

An N-terminal signal peptide occupies residues 1–24 (MPRQLLSGTVLLGAAFLLAGSTSG). The Extracellular portion of the chain corresponds to 25-749 (SKLKVPVLSV…GTVERSNLEL (725 aa)). Ig-like C2-type domains lie at 30–121 (PVLS…SIVY), 120–222 (VYVF…HRET), 227–323 (DIKL…TTVI), 331–417 (NLKR…LTVT), 424–545 (PQIY…RNVS), 552–644 (PSGF…KDVS), and 651–737 (PALL…AYVT). Asn48, Asn73, Asn82, Asn98, and Asn125 each carry an N-linked (GlcNAc...) asparagine glycan. A disulfide bridge links Cys51 with Cys105. Cys154 and Cys203 are disulfide-bonded. N-linked (GlcNAc...) asparagine glycosylation occurs at Asn247. Cys248 and Cys307 form a disulfide bridge. N-linked (GlcNAc...) asparagine glycans are attached at residues Asn319, Asn383, Asn398, Asn409, Asn413, Asn470, Asn512, Asn543, Asn593, Asn615, and Asn663. Cysteines 450 and 531 form a disulfide. Residues Cys573 and Cys626 are joined by a disulfide bond. Cys672 and Cys721 form a disulfide bridge. Residues 750–770 (ITLTCTCVAATLFWLLLTLFI) traverse the membrane as a helical segment. The Cytoplasmic segment spans residues 771-1327 (RKLKRPYFSE…SVVHYSQPSI (557 aa)). Positions 819-1151 (LKLGKSLGHG…ELVKRLGDLL (333 aa)) constitute a Protein kinase domain. ATP contacts are provided by residues 825 to 833 (LGHGAFGKV) and Lys853. The disordered stretch occupies residues 950–971 (ASVTSSESFASSGFQEDKSLSD). Over residues 951-961 (SVTSSESFASS) the composition is skewed to low complexity. The active-site Proton acceptor is Asp1015. Phosphotyrosine; by autocatalysis is present on residues Tyr1046, Tyr1162, Tyr1202, Tyr1231, Tyr1316, and Tyr1322.

It belongs to the protein kinase superfamily. Tyr protein kinase family. CSF-1/PDGF receptor subfamily. As to quaternary structure, interacts with VEGFA, VEGFB and PGF. Monomer in the absence of bound VEGFA, VEGFB or PGF. Homodimer in the presence of bound VEGFA, VEGFB and PGF. Post-translationally, autophosphorylated on tyrosine residues upon ligand binding.

Its subcellular location is the cell membrane. It is found in the endosome. It localises to the secreted. The catalysed reaction is L-tyrosyl-[protein] + ATP = O-phospho-L-tyrosyl-[protein] + ADP + H(+). Its activity is regulated as follows. Present in an inactive conformation in the absence of bound ligand. Binding of VEGFA, VEGFB or PGF leads to dimerization and activation by autophosphorylation on tyrosine residues. Its function is as follows. Tyrosine-protein kinase that acts as a cell-surface receptor for VEGFA, VEGFB and PGF, and plays an essential role in the regulation of angiogenesis, cell survival, cell migration, macrophage function, and chemotaxis. Acts as a positive regulator of postnatal retinal hyaloid vessel regression. Has very high affinity for VEGFA and relatively low protein kinase activity; may function as a negative regulator of VEGFA signaling by limiting the amount of free VEGFA and preventing its binding to KDR. Ligand binding leads to the activation of several signaling cascades. Activation of PLCG1 leads to the production of the cellular signaling molecules diacylglycerol and inositol 1,4,5-trisphosphate and the activation of protein kinase C. Mediates phosphorylation of PIK3R1, the regulatory subunit of phosphatidylinositol 3-kinase, leading to activation of phosphatidylinositol kinase and the downstream signaling pathway. Mediates activation of MAPK1/ERK2, MAPK3/ERK1 and the MAP kinase signaling pathway, as well as of the AKT1 signaling pathway. Phosphorylates PLCG1. Promotes phosphorylation of AKT1 and CBL. The protein is Vascular endothelial growth factor receptor 1 (FLT1) of Gallus gallus (Chicken).